The following is a 105-amino-acid chain: Integration host factor subunit alpha (105 aa).

Belongs to the bacterial histone-like protein family. Heterodimer of an alpha and a beta chain.

This protein is one of the two subunits of integration host factor, a specific DNA-binding protein that functions in genetic recombination as well as in transcriptional and translational control. This is Integration host factor subunit alpha from Rhodospirillum rubrum (strain ATCC 11170 / ATH 1.1.1 / DSM 467 / LMG 4362 / NCIMB 8255 / S1).